Reading from the N-terminus, the 371-residue chain is O-antigen chain mannosyltransferase C (371 aa).

The protein belongs to the glycosyltransferase group 1 family. Glycosyltransferase 4 subfamily.

The catalysed reaction is N-acetyl-alpha-D-glucosaminyl-di-trans,octa-cis-undecaprenyl diphosphate + GDP-alpha-D-mannose = alpha-D-mannosyl-(1-&gt;3)-N-acetyl-alpha-D-glucosaminyl-di-trans,octa-cis-undecaprenyl diphosphate + GDP + H(+). It participates in bacterial outer membrane biogenesis; LPS O-antigen biosynthesis. Mannosyltransferase involved in the biosynthesis of the repeat unit of the lipopolysaccharide (LPS) O-antigen region. Catalyzes the transfer of a single alpha-(1-&gt;3)-linked mannose residue to the acceptor N-acetyl-glucosaminyl-diphospho-undecaprenol during the synthesis of the adapter region. The polypeptide is O-antigen chain mannosyltransferase C (Escherichia coli).